A 548-amino-acid chain; its full sequence is Tylosin resistance ATP-binding protein TlrC (548 aa).

2 ABC transporter domains span residues 9–265 and 347–547; these read LSLH…RRRQ and IATA…VSGA. ATP is bound by residues 41-48 and 387-394; these read GDNGAGKS and GPNGAGKS.

This sequence belongs to the ABC transporter superfamily.

It localises to the cell membrane. Its function is as follows. Responsible for tylosin resistance, and is proposed to be a subunit of a multicomponent export system for the energy-dependent efflux of tylosin. The polypeptide is Tylosin resistance ATP-binding protein TlrC (tlrC) (Streptomyces fradiae (Streptomyces roseoflavus)).